A 337-amino-acid polypeptide reads, in one-letter code: ERI1 exoribonuclease 3 (337 aa).

Positions 146-320 constitute an Exonuclease domain; it reads FLVLDFEATC…DDCKNIANIM (175 aa). Mg(2+)-binding residues include D150, E152, and D249. The Proton acceptor role is filled by E152. E152 provides a ligand contact to AMP. The Proton acceptor role is filled by H307. H307 contributes to the AMP binding site. D312 is a binding site for Mg(2+).

Interacts with PRNP. It depends on Mg(2+) as a cofactor.

This chain is ERI1 exoribonuclease 3 (ERI3), found in Homo sapiens (Human).